We begin with the raw amino-acid sequence, 427 residues long: Homoserine O-acetyltransferase FUB5 (427 aa).

The span at 1–13 shows a compositional bias: low complexity; the sequence is MTTTTTAPALPTP. The disordered stretch occupies residues 1 to 35; that stretch reads MTTTTTAPALPTPIHDGLGNGTTYERSIPRPVNPF. In terms of domain architecture, AB hydrolase-1 spans 77-400; that stretch reads NVMIICHALS…VSDDGHDAFL (324 aa). Serine 175 functions as the Nucleophile in the catalytic mechanism. Positions 260-297 are disordered; the sequence is RFGRDTGNKKKAKNKGSETLPSNSTPIHSQGGADETPV. Over residues 276–287 the composition is skewed to polar residues; it reads SETLPSNSTPIH. Residues aspartate 367 and histidine 396 contribute to the active site.

The protein belongs to the AB hydrolase superfamily. MetX family.

It catalyses the reaction L-homoserine + acetyl-CoA = O-acetyl-L-homoserine + CoA. The protein operates within mycotoxin biosynthesis. Its function is as follows. Homoserine O-acetyltransferase; part of the gene cluster that mediates the biosynthesis of fusaric acid, a mycotoxin with low to moderate toxicity to animals and humans, but with high phytotoxic properties. L-aspartate is suggested as fusaric acid amino acid precursor that is activated and further processed to O-acetyl-L-homoserine by cluster enzymes aspartate kinase FUB3 and homoserine O-acetyltransferase FUB5, as well as enzymes of the primary metabolism. The polyketide synthase (PKS) FUB1 generates the triketide trans-2-hexenal which is presumptively released by the hydrolase FUB4 and linked to the NRPS-bound amino acid precursor by NAD(P)-dependent dehydrogenase FUB6. FUB1, FUB4, and the non-canonical NRPS Fub8 may form an enzyme complex. Further processing of the NRPS-bound intermediate might be carried out by FUB6 and the sulfhydrylase FUB7, enabling a spontaneous electrocyclization to close the carbon backbone of fusaric acid. Dihydrofusaric acid is likely to be released via reduction by the thioester reductase (TR) domain of FUB8 whereupon the final oxidation to fusaric acid may (also) be performed by the FMN-dependent dehydrogenase FUB9. The polypeptide is Homoserine O-acetyltransferase FUB5 (Gibberella fujikuroi (strain CBS 195.34 / IMI 58289 / NRRL A-6831) (Bakanae and foot rot disease fungus)).